Consider the following 434-residue polypeptide: Methylenetetrahydrofolate--tRNA-(uracil-5-)-methyltransferase TrmFO (434 aa).

10–15 contacts FAD; sequence GAGLAG.

Belongs to the MnmG family. TrmFO subfamily. FAD serves as cofactor.

It localises to the cytoplasm. The enzyme catalyses uridine(54) in tRNA + (6R)-5,10-methylene-5,6,7,8-tetrahydrofolate + NADH + H(+) = 5-methyluridine(54) in tRNA + (6S)-5,6,7,8-tetrahydrofolate + NAD(+). It catalyses the reaction uridine(54) in tRNA + (6R)-5,10-methylene-5,6,7,8-tetrahydrofolate + NADPH + H(+) = 5-methyluridine(54) in tRNA + (6S)-5,6,7,8-tetrahydrofolate + NADP(+). In terms of biological role, catalyzes the folate-dependent formation of 5-methyl-uridine at position 54 (M-5-U54) in all tRNAs. This chain is Methylenetetrahydrofolate--tRNA-(uracil-5-)-methyltransferase TrmFO, found in Bacillus anthracis (strain A0248).